We begin with the raw amino-acid sequence, 180 residues long: Peptidyl-tRNA hydrolase (180 aa).

TRNA is bound at residue Tyr13. His18 functions as the Proton acceptor in the catalytic mechanism. Residues Tyr58, Asn60, and Asn100 each coordinate tRNA.

Belongs to the PTH family. In terms of assembly, monomer.

It is found in the cytoplasm. It carries out the reaction an N-acyl-L-alpha-aminoacyl-tRNA + H2O = an N-acyl-L-amino acid + a tRNA + H(+). Functionally, hydrolyzes ribosome-free peptidyl-tRNAs (with 1 or more amino acids incorporated), which drop off the ribosome during protein synthesis, or as a result of ribosome stalling. Catalyzes the release of premature peptidyl moieties from peptidyl-tRNA molecules trapped in stalled 50S ribosomal subunits, and thus maintains levels of free tRNAs and 50S ribosomes. This chain is Peptidyl-tRNA hydrolase, found in Fervidobacterium nodosum (strain ATCC 35602 / DSM 5306 / Rt17-B1).